The following is a 122-amino-acid chain: Large ribosomal subunit protein uL14 (122 aa).

Belongs to the universal ribosomal protein uL14 family. Part of the 50S ribosomal subunit. Forms a cluster with proteins L3 and L19. In the 70S ribosome, L14 and L19 interact and together make contacts with the 16S rRNA in bridges B5 and B8.

Functionally, binds to 23S rRNA. Forms part of two intersubunit bridges in the 70S ribosome. The sequence is that of Large ribosomal subunit protein uL14 from Chlamydia muridarum (strain MoPn / Nigg).